A 329-amino-acid polypeptide reads, in one-letter code: GTP 3',8-cyclase (329 aa).

Positions 8-234 (AFARKFYYLR…QLRQRSDGPA (227 aa)) constitute a Radical SAM core domain. Arg17 lines the GTP pocket. Cys24 and Cys28 together coordinate [4Fe-4S] cluster. Tyr30 is an S-adenosyl-L-methionine binding site. Cys31 lines the [4Fe-4S] cluster pocket. GTP is bound at residue Arg68. Gly72 is an S-adenosyl-L-methionine binding site. Thr99 is a binding site for GTP. Ser123 provides a ligand contact to S-adenosyl-L-methionine. Lys160 is a binding site for GTP. Met194 is an S-adenosyl-L-methionine binding site. Cys257 and Cys260 together coordinate [4Fe-4S] cluster. Residue 262 to 264 (RLR) coordinates GTP. A [4Fe-4S] cluster-binding site is contributed by Cys274.

It belongs to the radical SAM superfamily. MoaA family. As to quaternary structure, monomer and homodimer. Requires [4Fe-4S] cluster as cofactor.

It carries out the reaction GTP + AH2 + S-adenosyl-L-methionine = (8S)-3',8-cyclo-7,8-dihydroguanosine 5'-triphosphate + 5'-deoxyadenosine + L-methionine + A + H(+). It functions in the pathway cofactor biosynthesis; molybdopterin biosynthesis. Its function is as follows. Catalyzes the cyclization of GTP to (8S)-3',8-cyclo-7,8-dihydroguanosine 5'-triphosphate. The polypeptide is GTP 3',8-cyclase (Escherichia coli (strain K12 / MC4100 / BW2952)).